The following is a 750-amino-acid chain: 1,4-alpha-glucan branching enzyme GlgB (750 aa).

Catalysis depends on aspartate 425, which acts as the Nucleophile. Residue glutamate 478 is the Proton donor of the active site.

The protein belongs to the glycosyl hydrolase 13 family. GlgB subfamily. Monomer.

It carries out the reaction Transfers a segment of a (1-&gt;4)-alpha-D-glucan chain to a primary hydroxy group in a similar glucan chain.. The protein operates within glycan biosynthesis; glycogen biosynthesis. Its function is as follows. Catalyzes the formation of the alpha-1,6-glucosidic linkages in glycogen by scission of a 1,4-alpha-linked oligosaccharide from growing alpha-1,4-glucan chains and the subsequent attachment of the oligosaccharide to the alpha-1,6 position. This is 1,4-alpha-glucan branching enzyme GlgB from Cupriavidus pinatubonensis (strain JMP 134 / LMG 1197) (Cupriavidus necator (strain JMP 134)).